We begin with the raw amino-acid sequence, 233 residues long: Large ribosomal subunit protein uL1 (233 aa).

Belongs to the universal ribosomal protein uL1 family. Part of the 50S ribosomal subunit.

Functionally, binds directly to 23S rRNA. The L1 stalk is quite mobile in the ribosome, and is involved in E site tRNA release. Its function is as follows. Protein L1 is also a translational repressor protein, it controls the translation of the L11 operon by binding to its mRNA. In Photobacterium profundum (strain SS9), this protein is Large ribosomal subunit protein uL1.